The primary structure comprises 343 residues: Protein RecA (343 aa).

64–71 serves as a coordination point for ATP; that stretch reads GPESSGKT.

This sequence belongs to the RecA family.

It is found in the cytoplasm. Functionally, can catalyze the hydrolysis of ATP in the presence of single-stranded DNA, the ATP-dependent uptake of single-stranded DNA by duplex DNA, and the ATP-dependent hybridization of homologous single-stranded DNAs. It interacts with LexA causing its activation and leading to its autocatalytic cleavage. The sequence is that of Protein RecA from Acidiphilium cryptum (strain JF-5).